Reading from the N-terminus, the 427-residue chain is Glutamate-1-semialdehyde 2,1-aminomutase (427 aa).

Lys-265 is subject to N6-(pyridoxal phosphate)lysine.

This sequence belongs to the class-III pyridoxal-phosphate-dependent aminotransferase family. HemL subfamily. As to quaternary structure, homodimer. It depends on pyridoxal 5'-phosphate as a cofactor.

It localises to the cytoplasm. It catalyses the reaction (S)-4-amino-5-oxopentanoate = 5-aminolevulinate. It functions in the pathway porphyrin-containing compound metabolism; protoporphyrin-IX biosynthesis; 5-aminolevulinate from L-glutamyl-tRNA(Glu): step 2/2. The sequence is that of Glutamate-1-semialdehyde 2,1-aminomutase from Burkholderia pseudomallei (strain 668).